Here is a 1058-residue protein sequence, read N- to C-terminus: Non-canonical non-ribosomal peptide synthetase FUB8 (1058 aa).

The interval 43–365 (EISRDEPDRV…LASVVMHPDE (323 aa)) is adenylation (A) domain. A Carrier domain is found at 566 to 643 (TTEDVVRSGI…QLSHSVWTHL (78 aa)). The residue at position 601 (serine 601) is an O-(pantetheine 4'-phosphoryl)serine. The thioester reductase (TR) domain stretch occupies residues 680–921 (LTGTTGEIGS…IPIDLLAEVI (242 aa)).

Its pathway is mycotoxin biosynthesis. Its function is as follows. Non-canonical non-ribosomal peptide synthetase; part of the gene cluster that mediates the biosynthesis of fusaric acid, a mycotoxin with low to moderate toxicity to animals and humans, but with high phytotoxic properties. L-aspartate is suggested as fusaric acid amino acid precursor that is activated and further processed to O-acetyl-L-homoserine by cluster enzymes aspartate kinase FUB3 and homoserine O-acetyltransferase FUB5, as well as enzymes of the primary metabolism. The polyketide synthase (PKS) FUB1 generates the triketide trans-2-hexenal which is presumptively released by the hydrolase FUB4 and linked to the NRPS-bound amino acid precursor by NAD(P)-dependent dehydrogenase FUB6. FUB1, FUB4, and the non-canonical NRPS Fub8 may form an enzyme complex. Further processing of the NRPS-bound intermediate might be carried out by FUB6 and the sulfhydrylase FUB7, enabling a spontaneous electrocyclization to close the carbon backbone of fusaric acid. Dihydrofusaric acid is likely to be released via reduction by the thioester reductase (TR) domain of FUB8 whereupon the final oxidation to fusaric acid may (also) be performed by the FMN-dependent dehydrogenase FUB9. The protein is Non-canonical non-ribosomal peptide synthetase FUB8 of Gibberella moniliformis (strain M3125 / FGSC 7600) (Maize ear and stalk rot fungus).